The primary structure comprises 321 residues: Glucokinase (321 aa).

Residue 8-13 (GDVGGT) participates in ATP binding.

This sequence belongs to the bacterial glucokinase family.

It is found in the cytoplasm. The enzyme catalyses D-glucose + ATP = D-glucose 6-phosphate + ADP + H(+). This chain is Glucokinase, found in Salmonella paratyphi B (strain ATCC BAA-1250 / SPB7).